Reading from the N-terminus, the 928-residue chain is Interphotoreceptor matrix proteoglycan 1 (928 aa).

The N-terminal stretch at 1–20 is a signal peptide; it reads MHLKTGLIFLAICLALQVQG. Residues 26–50 are disordered; the sequence is SKTNHGEAKQLADASGSDKTERTTK. Basic and acidic residues predominate over residues 29-49; it reads NHGEAKQLADASGSDKTERTT. The N-linked (GlcNAc...) asparagine glycan is linked to asparagine 143. Residues 164–182 show a composition bias toward basic and acidic residues; it reads QERKDEISTDKTGGKKLED. The interval 164 to 191 is disordered; it reads QERKDEISTDKTGGKKLEDIPSVSTGPP. 2 N-linked (GlcNAc...) asparagine glycosylation sites follow: asparagine 203 and asparagine 212. The SEA 1 domain maps to 231 to 356; sequence AEQMVEFSVT…TKLTVTDLQQ (126 aa). Disordered regions lie at residues 441 to 481 and 494 to 522; these read LSRE…TEDI and ALVSTDSPAKPEDSYLPPPADESDSNDLI. Over residues 466–477 the composition is skewed to basic and acidic residues; it reads PSREPPHDRSPD. Residues 735 to 848 enclose the SEA 2 domain; it reads KELVVFFSLR…YSLDIEPADQ (114 aa). N-linked (GlcNAc...) asparagine glycans are attached at residues asparagine 756 and asparagine 780. The short motif at 785–793 is the Heparin- and hyaluronan-binding element; it reads KQLEILNFR. N-linked (GlcNAc...) asparagine glycans are attached at residues asparagine 794 and asparagine 812.

Highly glycosylated (N- and O-linked carbohydrates and sialic acid). Abundantly expressed in the retina (at protein level). Localizes to the photoreceptor layer of the interphotoreceptor matrix of the retina (at protein level).

It is found in the cell projection. Its subcellular location is the cilium. It localises to the photoreceptor outer segment. The protein localises to the secreted. The protein resides in the extracellular space. It is found in the extracellular matrix. Its subcellular location is the interphotoreceptor matrix. It localises to the photoreceptor inner segment. Chondroitin sulfate-, heparin- and hyaluronan-binding protein. May serve to form a basic macromolecular scaffold comprising the insoluble interphotoreceptor matrix. The protein is Interphotoreceptor matrix proteoglycan 1 of Gallus gallus (Chicken).